Consider the following 61-residue polypeptide: Small ribosomal subunit protein uS14B (61 aa).

Zn(2+) is bound by residues Cys-24, Cys-27, Cys-40, and Cys-43.

It belongs to the universal ribosomal protein uS14 family. Zinc-binding uS14 subfamily. As to quaternary structure, part of the 30S ribosomal subunit. Contacts proteins S3 and S10. Requires Zn(2+) as cofactor.

Binds 16S rRNA, required for the assembly of 30S particles and may also be responsible for determining the conformation of the 16S rRNA at the A site. In Mycobacteroides abscessus (strain ATCC 19977 / DSM 44196 / CCUG 20993 / CIP 104536 / JCM 13569 / NCTC 13031 / TMC 1543 / L948) (Mycobacterium abscessus), this protein is Small ribosomal subunit protein uS14B.